Reading from the N-terminus, the 140-residue chain is Large-conductance mechanosensitive channel (140 aa).

3 consecutive transmembrane segments (helical) span residues 14-34 (VLDLAVGVIIGGAFTSIVKSL), 37-57 (YLINPLIGLFIGGIDFSDWVL), and 66-86 (FGSFINAVINFLIIAFVVFIL).

This sequence belongs to the MscL family. Homopentamer.

The protein resides in the cell membrane. Its function is as follows. Channel that opens in response to stretch forces in the membrane lipid bilayer. May participate in the regulation of osmotic pressure changes within the cell. This Pediococcus pentosaceus (strain ATCC 25745 / CCUG 21536 / LMG 10740 / 183-1w) protein is Large-conductance mechanosensitive channel.